A 699-amino-acid chain; its full sequence is Elongation factor G (699 aa).

The tr-type G domain occupies E8–V290. GTP contacts are provided by residues A17–T24, D88–H92, and N142–D145.

The protein belongs to the TRAFAC class translation factor GTPase superfamily. Classic translation factor GTPase family. EF-G/EF-2 subfamily.

The protein localises to the cytoplasm. Its function is as follows. Catalyzes the GTP-dependent ribosomal translocation step during translation elongation. During this step, the ribosome changes from the pre-translocational (PRE) to the post-translocational (POST) state as the newly formed A-site-bound peptidyl-tRNA and P-site-bound deacylated tRNA move to the P and E sites, respectively. Catalyzes the coordinated movement of the two tRNA molecules, the mRNA and conformational changes in the ribosome. The chain is Elongation factor G from Acidithiobacillus ferrooxidans (strain ATCC 23270 / DSM 14882 / CIP 104768 / NCIMB 8455) (Ferrobacillus ferrooxidans (strain ATCC 23270)).